The following is a 715-amino-acid chain: Staphylocoagulase (715 aa).

Positions 1-26 (MKKQIISLGALAVASSLFTWDNKADA) are cleaved as a signal peptide. Residues 306–327 (KYGESETKSPVVKEENKVEDPQ) are compositionally biased toward basic and acidic residues. Disordered stretches follow at residues 306–348 (KYGE…EETT) and 430–470 (QGTE…FNKT). A compositionally biased stretch (polar residues) spans 431-443 (GTESTLKGIQGES). Repeat copies occupy residues 495-521 (ARPR…VSYG), 522-548 (ARPT…VSYG), 549-575 (ARPT…VSYG), 576-602 (ARPT…VSYG), 603-629 (ARPT…VSYG), 630-656 (ARPT…VSYG), 657-683 (ARPT…VSYG), and 684-710 (ARPT…ATYG). The segment at 495–710 (ARPRFNKPSE…THADGTATYG (216 aa)) is 8 X 27 AA tandem repeats of A-R-P-[RT]-[FQY]-[NK]-K-[PA]-S-[EK]-T-N-A-Y-N-V-T-T-[NH]-[QAG]-[DN]-G-[TQ]-[VA]-[ST]-Y-G. Positions 674–697 (THGNGQVSYGARPTYNKPSKTNAY) are disordered.

The protein belongs to the staphylocoagulase family.

Staphylocoagulase is an extracellular protein which specifically forms a complex with human prothrombin. This complex named staphylothrombin can clot fibrinogen without any proteolytic cleavage of prothrombin. This is Staphylocoagulase from Staphylococcus aureus.